Reading from the N-terminus, the 102-residue chain is Small ubiquitin-related modifier 1-A (102 aa).

The interval 1–20 is disordered; that stretch reads MSDQEAKPSSEDLGDKKDGG. The 78-residue stretch at 21-98 folds into the Ubiquitin-like domain; that stretch reads DYIKLKVIGQ…IEVYQEQTGG (78 aa). Residue Gly-98 forms a Glycyl lysine isopeptide (Gly-Lys) (interchain with K-? in acceptor proteins) linkage. A propeptide spanning residues 99 to 102 is cleaved from the precursor; sequence HSTF.

It belongs to the ubiquitin family. SUMO subfamily. Interacts with sae2, ube2i, ranbp2, pias1 and pias2. Covalently attached to a number of proteins including rangap1 and ranbp2. Interacts with sox9 and sox10. Cleavage of precursor form by a sentrin-specific protease is necessary for function.

Its subcellular location is the nucleus membrane. It localises to the nucleus speckle. The protein resides in the cytoplasm. It is found in the nucleus. The protein localises to the PML body. Its subcellular location is the cell membrane. In terms of biological role, ubiquitin-like protein that can be covalently attached to proteins as a monomer or a lysine-linked polymer. Covalent attachment via an isopeptide bond to its substrates requires prior activation by the E1 complex sae1-sae2 and linkage to the E2 enzyme ube2i. This post-translational modification on lysine residues of proteins plays a crucial role in a number of cellular processes such as nuclear transport, DNA replication and repair, mitosis and signal transduction. Polymeric sumo1 chains are also susceptible to polyubiquitination which functions as a signal for proteasomal degradation of modified proteins. This chain is Small ubiquitin-related modifier 1-A (sumo1-a), found in Xenopus laevis (African clawed frog).